Here is a 293-residue protein sequence, read N- to C-terminus: MKRIFLFIVTNLAVMVVLSATLRVLGVDRYITAQGINFQSLLILSVVIGFTGAIISLLISKPMAKWSTGARVIDPAAPGGSREAWLVETVHQLADRAGIGHPEVAIYDGSPNAFATGAFKNDSLVAVSTGLLDSMTEEEVAAVLGHEVAHIANGDMITLTLIQGVVNTFVVFLARVVGYFIDRTVFRNERGVGAGYFITVLVCEIIFGLLASIIVAWFSRQREYRADAGSAQLMGSREPMMRALARLGGLEPGELPKSFEASGIAGKGGLGAIFASHPPIQARIAALQHMRVV.

2 helical membrane passes run 4–24 (IFLF…TLRV) and 40–60 (SLLI…LLIS). His146 provides a ligand contact to Zn(2+). Glu147 is a catalytic residue. His150 is a Zn(2+) binding site. The next 2 helical transmembrane spans lie at 161 to 181 (LIQG…GYFI) and 197 to 217 (FITV…IVAW). Glu223 is a binding site for Zn(2+).

Belongs to the peptidase M48B family. Zn(2+) serves as cofactor.

It is found in the cell inner membrane. The protein is Protease HtpX homolog of Bordetella petrii (strain ATCC BAA-461 / DSM 12804 / CCUG 43448).